Reading from the N-terminus, the 190-residue chain is Holliday junction branch migration complex subunit RuvA (190 aa).

Residues 1 to 64 form a domain I region; sequence MIGRITGTLI…EDAQLLYGFG (64 aa). A domain II region spans residues 65 to 137; it reads SSAERSTFRE…MRGKLGADIG (73 aa). The tract at residues 137–141 is flexible linker; that stretch reads GATPH. Residues 142 to 190 form a domain III region; that stretch reads AASGHQSDILNALLALGYSDKESQAALKKLPDGVDVSEGIRLALKALVR.

This sequence belongs to the RuvA family. Homotetramer. Forms an RuvA(8)-RuvB(12)-Holliday junction (HJ) complex. HJ DNA is sandwiched between 2 RuvA tetramers; dsDNA enters through RuvA and exits via RuvB. An RuvB hexamer assembles on each DNA strand where it exits the tetramer. Each RuvB hexamer is contacted by two RuvA subunits (via domain III) on 2 adjacent RuvB subunits; this complex drives branch migration. In the full resolvosome a probable DNA-RuvA(4)-RuvB(12)-RuvC(2) complex forms which resolves the HJ.

It localises to the cytoplasm. In terms of biological role, the RuvA-RuvB-RuvC complex processes Holliday junction (HJ) DNA during genetic recombination and DNA repair, while the RuvA-RuvB complex plays an important role in the rescue of blocked DNA replication forks via replication fork reversal (RFR). RuvA specifically binds to HJ cruciform DNA, conferring on it an open structure. The RuvB hexamer acts as an ATP-dependent pump, pulling dsDNA into and through the RuvAB complex. HJ branch migration allows RuvC to scan DNA until it finds its consensus sequence, where it cleaves and resolves the cruciform DNA. The polypeptide is Holliday junction branch migration complex subunit RuvA (Bordetella pertussis (strain Tohama I / ATCC BAA-589 / NCTC 13251)).